A 234-amino-acid polypeptide reads, in one-letter code: Phosphoribosylaminoimidazole-succinocarboxamide synthase (234 aa).

Belongs to the SAICAR synthetase family.

It catalyses the reaction 5-amino-1-(5-phospho-D-ribosyl)imidazole-4-carboxylate + L-aspartate + ATP = (2S)-2-[5-amino-1-(5-phospho-beta-D-ribosyl)imidazole-4-carboxamido]succinate + ADP + phosphate + 2 H(+). Its pathway is purine metabolism; IMP biosynthesis via de novo pathway; 5-amino-1-(5-phospho-D-ribosyl)imidazole-4-carboxamide from 5-amino-1-(5-phospho-D-ribosyl)imidazole-4-carboxylate: step 1/2. In Streptococcus pyogenes serotype M1, this protein is Phosphoribosylaminoimidazole-succinocarboxamide synthase.